We begin with the raw amino-acid sequence, 248 residues long: Triosephosphate isomerase (248 aa).

Residue 9–11 (NWK) coordinates substrate. His-94 functions as the Electrophile in the catalytic mechanism. Residue Glu-166 is the Proton acceptor of the active site. Residues Gly-172, Ser-212, and 233–234 (GG) each bind substrate.

This sequence belongs to the triosephosphate isomerase family. Homodimer.

The protein localises to the cytoplasm. It catalyses the reaction D-glyceraldehyde 3-phosphate = dihydroxyacetone phosphate. Its pathway is carbohydrate biosynthesis; gluconeogenesis. It functions in the pathway carbohydrate degradation; glycolysis; D-glyceraldehyde 3-phosphate from glycerone phosphate: step 1/1. Functionally, involved in the gluconeogenesis. Catalyzes stereospecifically the conversion of dihydroxyacetone phosphate (DHAP) to D-glyceraldehyde-3-phosphate (G3P). The polypeptide is Triosephosphate isomerase (Clostridium beijerinckii (strain ATCC 51743 / NCIMB 8052) (Clostridium acetobutylicum)).